The sequence spans 24 residues: Brevinin-1La (24 aa).

Cys18 and Cys24 are oxidised to a cystine.

In terms of tissue distribution, expressed by the skin glands.

It localises to the secreted. Functionally, antibacterial activity against Gram-positive bacterium S.aureus and Gram-negative bacterium E.coli. This Rana luteiventris (Columbia spotted frog) protein is Brevinin-1La.